A 496-amino-acid chain; its full sequence is Lysine--tRNA ligase (496 aa).

Mg(2+) contacts are provided by Glu409 and Glu416.

It belongs to the class-II aminoacyl-tRNA synthetase family. As to quaternary structure, homodimer. Mg(2+) is required as a cofactor.

It localises to the cytoplasm. It carries out the reaction tRNA(Lys) + L-lysine + ATP = L-lysyl-tRNA(Lys) + AMP + diphosphate. This chain is Lysine--tRNA ligase, found in Streptococcus gordonii (strain Challis / ATCC 35105 / BCRC 15272 / CH1 / DL1 / V288).